The primary structure comprises 273 residues: Bifunctional protein FolD (273 aa).

NADP(+) contacts are provided by residues 155–157 (GRS), serine 180, and threonine 221.

It belongs to the tetrahydrofolate dehydrogenase/cyclohydrolase family. Homodimer.

It catalyses the reaction (6R)-5,10-methylene-5,6,7,8-tetrahydrofolate + NADP(+) = (6R)-5,10-methenyltetrahydrofolate + NADPH. It carries out the reaction (6R)-5,10-methenyltetrahydrofolate + H2O = (6R)-10-formyltetrahydrofolate + H(+). Its pathway is one-carbon metabolism; tetrahydrofolate interconversion. In terms of biological role, catalyzes the oxidation of 5,10-methylenetetrahydrofolate to 5,10-methenyltetrahydrofolate and then the hydrolysis of 5,10-methenyltetrahydrofolate to 10-formyltetrahydrofolate. This Coprothermobacter proteolyticus (strain ATCC 35245 / DSM 5265 / OCM 4 / BT) protein is Bifunctional protein FolD.